Consider the following 381-residue polypeptide: uncharacterized protein (381 aa).

Belongs to the glycerate kinase type-1 family.

This is an uncharacterized protein from Mycobacterium tuberculosis (strain CDC 1551 / Oshkosh).